Consider the following 465-residue polypeptide: MQGFISQVLGPVVDVDFNDYLPQINEAIVVNFESEGKKHKLVLEVAAHLGDNRVRTIAMDMTDGLVRGLKAEALGAPISVPVGEKVLGRIFNVTGDLIDEGEEISFDKKWAIHRDPPAFEDQSTKSEIFETGIKVVDLLAPYAKGGKVGLFGGAGVGKTVIIMELIHNVAFKHSGYSVFAGVGERTREGNDLYNEMKESNVLDKVALCYGQMNEPPGARNRIALTGLTMAEYFRDEMGLDVLMFIDNIFRFSQSGSEMSALLGRIPSAVGYQPTLASEMGKFQERITSTKKGSITSVQAVYVPADDLTDPAPATVFAHLDATTVLNRAIAEKGIYPAVDPLDSTSRMLDPNIIGEEHYKVARGVQSVLQKYKDLQDIIAILGMDELSEEDKLVVERARKIEKFLSQPFFVAEVFTGSPGKYISLEDTIAGFKGILEGKYDHLPENAFYMVGNIDEAIAKADKLKG.

An ATP-binding site is contributed by 152–159; it reads GGAGVGKT.

This sequence belongs to the ATPase alpha/beta chains family. F-type ATPases have 2 components, CF(1) - the catalytic core - and CF(0) - the membrane proton channel. CF(1) has five subunits: alpha(3), beta(3), gamma(1), delta(1), epsilon(1). CF(0) has three main subunits: a(1), b(2) and c(9-12). The alpha and beta chains form an alternating ring which encloses part of the gamma chain. CF(1) is attached to CF(0) by a central stalk formed by the gamma and epsilon chains, while a peripheral stalk is formed by the delta and b chains.

The protein localises to the cell inner membrane. It carries out the reaction ATP + H2O + 4 H(+)(in) = ADP + phosphate + 5 H(+)(out). Its function is as follows. Produces ATP from ADP in the presence of a proton gradient across the membrane. The catalytic sites are hosted primarily by the beta subunits. The chain is ATP synthase subunit beta from Campylobacter jejuni subsp. jejuni serotype O:6 (strain 81116 / NCTC 11828).